The chain runs to 377 residues: Dihydroorotate dehydrogenase (quinone) (377 aa).

Residues 82 to 86 and threonine 106 contribute to the FMN site; that span reads AGFDK. Lysine 86 is a binding site for substrate. Position 131 to 135 (131 to 135) interacts with substrate; the sequence is NRMGF. FMN-binding residues include asparagine 159 and asparagine 192. Asparagine 192 is a substrate binding site. Serine 195 functions as the Nucleophile in the catalytic mechanism. A substrate-binding site is contributed by asparagine 197. Lysine 228 and threonine 256 together coordinate FMN. 257-258 contacts substrate; that stretch reads NT. FMN contacts are provided by residues glycine 282, glycine 311, and 332 to 333; that span reads YT.

This sequence belongs to the dihydroorotate dehydrogenase family. Type 2 subfamily. In terms of assembly, monomer. FMN is required as a cofactor.

Its subcellular location is the cell membrane. The catalysed reaction is (S)-dihydroorotate + a quinone = orotate + a quinol. It participates in pyrimidine metabolism; UMP biosynthesis via de novo pathway; orotate from (S)-dihydroorotate (quinone route): step 1/1. In terms of biological role, catalyzes the conversion of dihydroorotate to orotate with quinone as electron acceptor. The polypeptide is Dihydroorotate dehydrogenase (quinone) (Corynebacterium efficiens (strain DSM 44549 / YS-314 / AJ 12310 / JCM 11189 / NBRC 100395)).